A 177-amino-acid chain; its full sequence is dCTP deaminase (177 aa).

Residues 100 to 105 (RSSIAR) and Asp-116 each bind dCTP. Residue Glu-126 is the Proton donor/acceptor of the active site. DCTP is bound by residues Tyr-159 and Gln-166.

This sequence belongs to the dCTP deaminase family. As to quaternary structure, homotrimer.

It catalyses the reaction dCTP + H2O + H(+) = dUTP + NH4(+). The protein operates within pyrimidine metabolism; dUMP biosynthesis; dUMP from dCTP (dUTP route): step 1/2. In terms of biological role, catalyzes the deamination of dCTP to dUTP. This chain is dCTP deaminase, found in Korarchaeum cryptofilum (strain OPF8).